Here is a 168-residue protein sequence, read N- to C-terminus: Small ribosomal subunit protein uS5 (168 aa).

An S5 DRBM domain is found at 13-76; it reads IQEKLVAVRR…ENARRNMISV (64 aa).

The protein belongs to the universal ribosomal protein uS5 family. In terms of assembly, part of the 30S ribosomal subunit. Contacts proteins S4 and S8.

Functionally, with S4 and S12 plays an important role in translational accuracy. Its function is as follows. Located at the back of the 30S subunit body where it stabilizes the conformation of the head with respect to the body. In Coxiella burnetii (strain RSA 493 / Nine Mile phase I), this protein is Small ribosomal subunit protein uS5.